Reading from the N-terminus, the 426-residue chain is Cell cycle checkpoint control protein RAD9B (426 aa).

Serine 359 carries the post-translational modification Phosphoserine.

The protein belongs to the rad9 family. As to quaternary structure, interacts with HUS1, HUS1B, RAD1, RAD9A and RAD17. In terms of tissue distribution, expressed in testis and skeletal muscle.

The sequence is that of Cell cycle checkpoint control protein RAD9B (RAD9B) from Homo sapiens (Human).